Reading from the N-terminus, the 183-residue chain is ATP-dependent protease subunit HslV (183 aa).

The active site involves threonine 13. Na(+) contacts are provided by glycine 168, cysteine 171, and threonine 174.

This sequence belongs to the peptidase T1B family. HslV subfamily. As to quaternary structure, a double ring-shaped homohexamer of HslV is capped on each side by a ring-shaped HslU homohexamer. The assembly of the HslU/HslV complex is dependent on binding of ATP.

It localises to the cytoplasm. It carries out the reaction ATP-dependent cleavage of peptide bonds with broad specificity.. Allosterically activated by HslU binding. Protease subunit of a proteasome-like degradation complex believed to be a general protein degrading machinery. In Xanthomonas campestris pv. campestris (strain ATCC 33913 / DSM 3586 / NCPPB 528 / LMG 568 / P 25), this protein is ATP-dependent protease subunit HslV.